The chain runs to 288 residues: Ankyrin repeat and SOCS box protein 8 (288 aa).

Ser17 carries the phosphoserine modification. ANK repeat units lie at residues 52–81 (GTLK…EVNA), 85–113 (YNRT…NPNA), 117–146 (NRDT…SVNA), and 150–179 (NNDT…EVRV). The SOCS box domain occupies 235 to 288 (QLCEKLTVLCSAPGTLKTLARYTVRRSLGLQYLPDAVKGLPLPASLKEYLLLLE).

Belongs to the ankyrin SOCS box (ASB) family. In terms of assembly, interacts with TBK1; this interaction promotes TBK1 proteasomal degradation. Post-translationally, phosphorylated by TBK1.

The protein localises to the cytoplasm. It participates in protein modification; protein ubiquitination. Its function is as follows. May be a substrate-recognition component of a SCF-like ECS (Elongin-Cullin-SOCS-box protein) E3 ubiquitin-protein ligase complex which mediates the ubiquitination and subsequent proteasomal degradation of target proteins. Inhibits IFN-beta production through the IRF3 signaling pathway by targeting TBK1 via 'Lys-48'-linked ubiquitination, leading to its proteasomal degradation. This chain is Ankyrin repeat and SOCS box protein 8 (ASB8), found in Pongo abelii (Sumatran orangutan).